A 232-amino-acid polypeptide reads, in one-letter code: Replicative helicase loading/DNA remodeling protein DnaD (232 aa).

Residues 1–98 (MKKQQFIDMQ…QNGIKFEKYS (98 aa)) form an N-terminal domain region. The tract at residues 1–116 (MKKQQFIDMQ…YEYIQLAQNQ (116 aa)) is DDBH1. Residues 99–205 (LQPLWGKLYE…VEQAKIHSQK (107 aa)) form a C-terminal domain region. Residues 131-200 (TIFEEEFARP…NGLKTVEQAK (70 aa)) are DDBH2. The interval 206–232 (FRRVQAKQNEPQKEYKRQVPFYNWLEQ) is C-terminal tail.

Belongs to the DnaB/DnaD family. As to quaternary structure, the DNA replisome assembles sequentially on oriC in this order; DnaA, DnaD, DnaB, DnaI-DnaC helicase. Homodimer. Homotetramer. Oligomerization in vitro is concentration dependent. Part of the replication restart primosome which assembles in this order; PriA, DnaD then DnaB. The preferred DNA substrate mimics an arrested DNA replication fork with unreplicated lagging strand. Interacts with DnaA, DnaB and PriA. Interaction with DnaB requires DnaD to dimerize.

Its subcellular location is the cytoplasm. Its activity is regulated as follows. Recruitment to oriC requires DnaA but not DnaB, DnaC or DnaI and is blocked by SirA. In terms of biological role, required to load replicative helicase DnaC onto replication forks. Binds to a DnaD recognition element (DRE) which has pairs of 5'-TnnT-3' motifs; there is a strong DRE at oriC opposite the DnaA-trios recognized by DnaA. During DNA replication from the origin of replication (oriC) in the DNA replisome, DnaD is required after DnaA, before DnaB and subsequent helicase DnaC loading. A component of the replication restart primosome, which reloads the replicative helicase on sites other than oriC. DnaB, DnaD and DnaI may also be required for a PriA-independent pathway of replication fork restart. DnaB and DnaD work together to allow DnaB access to single-stranded (ss)DNA. Has DNA remodeling activity that converts supercoiled plasmid into an open circular form; DnaD forms scaffolds inside the plasmid DNA. Plasmid relaxation incorporates both wrapping around the DnaD protein scaffold and simultaneous untwisting, no nicking of the DNA is seen. Also converts linear DNA into an open circular form. Disrupts a replicative helicase-DnaI complex. Inhibits the ability of DnaA-ATP to form a helix on DNA; does not disassemble preformed helices in vitro. Binds ssDNA, and replication fork-like substrates, supercoiled plasmid, but not stably to short double-stranded (ds)DNA. DnaD stimulates DnaB DNA-binding activities. DnaB and DnaD are required to load helicase on the repN plasmid origin of replication (oriN). Causes a severe growth defect upon overexpression even in an oriC-independent strain. This Bacillus subtilis (strain 168) protein is Replicative helicase loading/DNA remodeling protein DnaD.